The sequence spans 223 residues: Urease subunit alpha (223 aa).

The interval 1-101 (MHFTQQQLQR…LVTIHEPIAN (101 aa)) is urease gamma. The interval 102-223 (DDKIKAGEIF…LSKAKEKGFL (122 aa)) is urease beta.

This sequence in the N-terminal section; belongs to the urease gamma subunit family. In the C-terminal section; belongs to the urease beta subunit family. In terms of assembly, heterohexamer of 3 UreA (alpha) and 3 UreB (beta) subunits.

It localises to the cytoplasm. It catalyses the reaction urea + 2 H2O + H(+) = hydrogencarbonate + 2 NH4(+). It functions in the pathway nitrogen metabolism; urea degradation; CO(2) and NH(3) from urea (urease route): step 1/1. The sequence is that of Urease subunit alpha from Campylobacter lari.